The following is a 287-amino-acid chain: ATP synthase gamma chain (287 aa).

It belongs to the ATPase gamma chain family. As to quaternary structure, F-type ATPases have 2 components, CF(1) - the catalytic core - and CF(0) - the membrane proton channel. CF(1) has five subunits: alpha(3), beta(3), gamma(1), delta(1), epsilon(1). CF(0) has three main subunits: a, b and c.

The protein localises to the cell inner membrane. Its function is as follows. Produces ATP from ADP in the presence of a proton gradient across the membrane. The gamma chain is believed to be important in regulating ATPase activity and the flow of protons through the CF(0) complex. The polypeptide is ATP synthase gamma chain (Escherichia fergusonii (strain ATCC 35469 / DSM 13698 / CCUG 18766 / IAM 14443 / JCM 21226 / LMG 7866 / NBRC 102419 / NCTC 12128 / CDC 0568-73)).